A 190-amino-acid chain; its full sequence is Transcription antitermination protein NusB (190 aa).

The segment at 158 to 190 (AGTSEDHVPQREPAAGQLGQDDSNGGQVAAVCR) is disordered.

Belongs to the NusB family.

In terms of biological role, involved in transcription antitermination. Required for transcription of ribosomal RNA (rRNA) genes. Binds specifically to the boxA antiterminator sequence of the ribosomal RNA (rrn) operons. This Mycobacterium leprae (strain TN) protein is Transcription antitermination protein NusB.